The chain runs to 305 residues: Axin interactor, dorsalization-associated protein A (305 aa).

The segment at 153–220 (GTLLPRLPSE…RKEDTYVHFN (68 aa)) is axin-binding. In terms of domain architecture, C2 Aida-type spans 156–303 (LPRLPSEPGM…LYLHLLQTLL (148 aa)).

It belongs to the AIDA family.

Functionally, acts as a ventralizing factor during embryogenesis. Inhibits axin-mediated JNK activation by binding axin and disrupting axin homodimerization. This in turn antagonizes a Wnt/beta-catenin-independent dorsalization pathway activated by axin/JNK-signaling. The polypeptide is Axin interactor, dorsalization-associated protein A (aida-a) (Xenopus laevis (African clawed frog)).